The sequence spans 553 residues: Solute carrier family 45 member 3 (553 aa).

11 consecutive transmembrane segments (helical) span residues 19 to 39 (LLVN…ITYV), 52 to 72 (FMTM…PLLG), 88 to 108 (FIWA…RAGW), 120 to 140 (LELA…QVCF), 161 to 181 (FSVY…LPAI), 198 to 218 (CLFG…LFVT), 275 to 295 (FVAE…YTDF), 323 to 343 (MGSL…LVMD), 353 to 373 (SVYL…CLSH), 382 to 402 (AALT…LASL), and 522 to 542 (AYMV…TQVV).

It belongs to the glycoside-pentoside-hexuronide (GPH) cation symporter transporter (TC 2.A.2) family. As to expression, expressed in the epididymis. Primarily expressed in the prostate, but also in other tissues.

The protein resides in the membrane. It carries out the reaction sucrose(out) + H(+)(out) = sucrose(in) + H(+)(in). Proton-associated sucrose transporter. May be able to transport also glucose and fructose. The protein is Solute carrier family 45 member 3 (Slc45a3) of Mus musculus (Mouse).